A 147-amino-acid chain; its full sequence is Lysozyme C-3 (147 aa).

The signal sequence occupies residues 1 to 18; it reads MKALVILGLLFLSVAVQG. The region spanning 19–147 is the C-type lysozyme domain; sequence KVFERCELAR…VSSYVEGCKL (129 aa). 4 disulfide bridges follow: Cys24-Cys145, Cys48-Cys133, Cys83-Cys99, and Cys95-Cys113. Residues Glu53 and Asp71 contribute to the active site.

This sequence belongs to the glycosyl hydrolase 22 family. In terms of assembly, monomer. As to expression, expressed in stomach.

It is found in the secreted. It catalyses the reaction Hydrolysis of (1-&gt;4)-beta-linkages between N-acetylmuramic acid and N-acetyl-D-glucosamine residues in a peptidoglycan and between N-acetyl-D-glucosamine residues in chitodextrins.. Lysozymes have primarily a bacteriolytic function; those in tissues and body fluids are associated with the monocyte-macrophage system and enhance the activity of immunoagents. This is Lysozyme C-3 from Ovis aries (Sheep).